The following is a 258-amino-acid chain: Membrane-associated protein Vipp1 (258 aa).

Residues 217–258 (MLPPATPVTQAQLPPQQETTPAKSNEVVDAELDSLRKQLDQL) are disordered. Residues 223-239 (PVTQAQLPPQQETTPAK) show a composition bias toward polar residues. The span at 249-258 (DSLRKQLDQL) shows a compositional bias: basic and acidic residues.

This sequence belongs to the PspA/Vipp/IM30 family. Polymerizes to form rings, filaments and ribbons. Rings are formed by stacked rungs that tilt to give a dome-shaped curvature. Rings form with symmetries ranging from C11 (55 subunits) to C17 (119 subunits).

It localises to the cell inner membrane. In terms of biological role, a membrane remodeling protein capable of forming rings and/or filaments on membranes, which then curve and tubulate the bilayer. Rings will form on liposomes, altering their positive curvature so the lipid bilayer is remodeled into a negative curve as the membrane enters the ring. Ring stacks of varying lengths can be seen joining isolated liposomes. A lipid monolayer can be drawn into the center of the rings. Required for thylakoid formation. This is Membrane-associated protein Vipp1 from Nostoc punctiforme (strain ATCC 29133 / PCC 73102).